Reading from the N-terminus, the 235-residue chain is Ribosomal RNA small subunit methyltransferase G (235 aa).

S-adenosyl-L-methionine is bound by residues Gly-74, Phe-79, Glu-97 to Thr-99, Ala-125 to Glu-126, and Arg-144.

The protein belongs to the methyltransferase superfamily. RNA methyltransferase RsmG family.

Its subcellular location is the cytoplasm. Specifically methylates the N7 position of a guanine in 16S rRNA. This chain is Ribosomal RNA small subunit methyltransferase G, found in Dehalococcoides mccartyi (strain ATCC BAA-2100 / JCM 16839 / KCTC 5957 / BAV1).